A 292-amino-acid polypeptide reads, in one-letter code: AT-hook motif nuclear-localized protein 23 (292 aa).

The disordered stretch occupies residues 23 to 100 (HLHHNSSSDD…SKNKPKPPVI (78 aa)). Residues 60–79 (SGGGSGSSGGGGGHGGGGDV) are compositionally biased toward gly residues. Residues 82 to 94 (RRPRGRPPGSKNK) constitute a DNA-binding region (a.T hook). The PPC domain maps to 106–242 (ANTLRAHILE…EDEQQQQLGG (137 aa)).

It localises to the nucleus. In terms of biological role, transcription factor that specifically binds AT-rich DNA sequences related to the nuclear matrix attachment regions (MARs). The sequence is that of AT-hook motif nuclear-localized protein 23 from Arabidopsis thaliana (Mouse-ear cress).